The chain runs to 118 residues: Large ribosomal subunit protein uL18 (118 aa).

Belongs to the universal ribosomal protein uL18 family. Part of the 50S ribosomal subunit; part of the 5S rRNA/L5/L18/L25 subcomplex. Contacts the 5S and 23S rRNAs.

Its function is as follows. This is one of the proteins that bind and probably mediate the attachment of the 5S RNA into the large ribosomal subunit, where it forms part of the central protuberance. In Rickettsia prowazekii (strain Madrid E), this protein is Large ribosomal subunit protein uL18.